The following is a 415-amino-acid chain: Thylakoid ADP,ATP carrier protein, chloroplastic (415 aa).

Residues 1–61 (MGEEKSLLQF…NFASLSVAIR (61 aa)) constitute a chloroplast transit peptide. 5 consecutive transmembrane segments (helical) span residues 106-126 (IALLSIVPKDAALFFAGAFAG), 182-207 (LPQVIRIVPYSAVQLFAYETYKKLFR), 219-239 (LGAGACAGMTSTLITYPLDVL), 273-293 (GPSLLSIAPYIAINFCVFDLV), and 309-329 (LLTAVVAAAIATGTCYPLDTI). Solcar repeat units lie at residues 113–205 (PKDA…YKKL), 213–296 (LSVL…VKKS), and 307–387 (SSLL…VKKL). Arg187 is a binding site for ADP. Arg330 is an ADP binding site. A helical transmembrane segment spans residues 362 to 388 (GFVPNALKSMPNSSIKLTTFDIVKKLI).

Belongs to the mitochondrial carrier (TC 2.A.29) family. Highly expressed in developing photosynthetic organs such as leaves, flower buds and green siliques. Also detected in roots, flowers, mature leaves and stems.

The protein resides in the plastid. The protein localises to the chloroplast thylakoid membrane. It is found in the chloroplast envelope. KM and Vmax values toward ATP only are increased by m-chlorocarbonyl cyanide phenylhydrazone (CCCP). The corresponding values for ADP are not affected. Functionally, specifically transports adenine nucleotides. Involved in the uptake of ATP into thylakoids in exchange for lumenal ADP. In Arabidopsis thaliana (Mouse-ear cress), this protein is Thylakoid ADP,ATP carrier protein, chloroplastic (TAAC).